The chain runs to 350 residues: Kievitone hydratase (350 aa).

A signal peptide spans 1 to 19 (MMISSVLVAGVVAVSAALA).

As to quaternary structure, homodimer. In terms of processing, glycosylated.

Its subcellular location is the secreted. The enzyme catalyses kievitone hydrate = kievitone + H2O. Converts fungitoxic kievitone to the less toxic kievitone hydrate, and thereby protects the pathogenic fungus against this phytoalexin. This is Kievitone hydratase (khs) from Fusarium solani subsp. phaseoli (Nectria haematococca).